Here is a 225-residue protein sequence, read N- to C-terminus: C-reactive protein (225 aa).

The first 19 residues, 1–19 (MEKLLWCSLVMIGFSQAFA), serve as a signal peptide directing secretion. Glutamine 20 carries the pyrrolidone carboxylic acid modification. The Pentraxin (PTX) domain occupies 24-225 (SKTAFVFPKE…DVFIKPQLWP (202 aa)). A disulfide bridge connects residues cysteine 55 and cysteine 116. Ca(2+) contacts are provided by asparagine 80, glutamate 157, glutamine 158, aspartate 159, and glutamine 169.

Belongs to the pentraxin family. Homopentamer. Pentraxin (or pentaxin) have a discoid arrangement of 5 non-covalently bound subunits. Interacts with FCN1; may regulate monocyte activation by FCN1. Ca(2+) serves as cofactor. Found in plasma.

The protein localises to the secreted. Displays several functions associated with host defense: it promotes agglutination, bacterial capsular swelling, phagocytosis and complement fixation through its calcium-dependent binding to phosphorylcholine. Can interact with DNA and histones and may scavenge nuclear material released from damaged circulating cells. In Mesocricetus auratus (Golden hamster), this protein is C-reactive protein (CRP).